Here is a 182-residue protein sequence, read N- to C-terminus: Troponin I, fast skeletal muscle (182 aa).

G2 is subject to N-acetylglycine. The involved in binding TNC stretch occupies residues 2 to 48 (GDEEKRNRAITARRQHLKSVMLQIAATELEKEEGRREAEKQNYLAEH). T12 carries the phosphothreonine; by PHK modification. Positions 97 to 117 (NQKLFDLRGKFKRPPLRRVRM) are involved in binding TNC and actin. At S118 the chain carries Phosphoserine; by PKA.

This sequence belongs to the troponin I family. In terms of assembly, binds to actin and tropomyosin.

Troponin I is the inhibitory subunit of troponin, the thin filament regulatory complex which confers calcium-sensitivity to striated muscle actomyosin ATPase activity. The protein is Troponin I, fast skeletal muscle (TNNI2) of Oryctolagus cuniculus (Rabbit).